Reading from the N-terminus, the 534-residue chain is ATP synthase subunit beta 2 (534 aa).

An ATP-binding site is contributed by Gly185–Thr192. A compositionally biased stretch (basic and acidic residues) spans Ala494–Ala505. Residues Ala494–Arg534 form a disordered region.

This sequence belongs to the ATPase alpha/beta chains family. F-type ATPases have 2 components, CF(1) - the catalytic core - and CF(0) - the membrane proton channel. CF(1) has five subunits: alpha(3), beta(3), gamma(1), delta(1), epsilon(1). CF(0) has three main subunits: a(1), b(2) and c(9-12). The alpha and beta chains form an alternating ring which encloses part of the gamma chain. CF(1) is attached to CF(0) by a central stalk formed by the gamma and epsilon chains, while a peripheral stalk is formed by the delta and b chains.

It is found in the cell inner membrane. It carries out the reaction ATP + H2O + 4 H(+)(in) = ADP + phosphate + 5 H(+)(out). Functionally, produces ATP from ADP in the presence of a proton gradient across the membrane. The catalytic sites are hosted primarily by the beta subunits. This chain is ATP synthase subunit beta 2, found in Burkholderia mallei (strain NCTC 10247).